Here is a 637-residue protein sequence, read N- to C-terminus: Early transcription factor 70 kDa subunit (637 aa).

It belongs to the helicase family. VETF subfamily. As to quaternary structure, heterodimer of a 70 kDa and a 82 kDa subunit. Part of the early transcription complex composed of ETF, RAP94/OPG109, and the DNA-directed RNA polymerase. Apparently non-glycosylated.

The protein localises to the virion. Functionally, acts with RNA polymerase to initiate transcription from early gene promoters. Is recruited by the RPO-associated protein of 94 kDa RAP94/OPG109 to form the early transcription complex, which also contains the core RNA polymerase. ETF heterodimer binds to early gene promoters. This is Early transcription factor 70 kDa subunit (OPG118) from Monkeypox virus.